A 62-amino-acid chain; its full sequence is DNA-directed RNA polymerase subunit Rpo10 (62 aa).

Positions 6, 9, 43, and 44 each coordinate Zn(2+).

This sequence belongs to the archaeal Rpo10/eukaryotic RPB10 RNA polymerase subunit family. In terms of assembly, part of the RNA polymerase complex. Requires Zn(2+) as cofactor.

The protein localises to the cytoplasm. The enzyme catalyses RNA(n) + a ribonucleoside 5'-triphosphate = RNA(n+1) + diphosphate. In terms of biological role, DNA-dependent RNA polymerase (RNAP) catalyzes the transcription of DNA into RNA using the four ribonucleoside triphosphates as substrates. This Methanocorpusculum labreanum (strain ATCC 43576 / DSM 4855 / Z) protein is DNA-directed RNA polymerase subunit Rpo10.